The following is an 87-amino-acid chain: Mu-theraphotoxin-Cg1a (87 aa).

The signal sequence occupies residues 1–21; that stretch reads MKVLVLITLAVLGAMFVWTSA. The propeptide occupies 22-50; it reads AELEERGSDQRDSPAWVKSMERIFQSEER. 3 cysteine pairs are disulfide-bonded: Cys-52/Cys-66, Cys-59/Cys-71, and Cys-65/Cys-79.

This sequence belongs to the neurotoxin 10 (Hwtx-1) family. 39 (Jztx-34) subfamily. As to expression, expressed by the venom gland.

It localises to the secreted. Functionally, potent and selective inhibitor of hNav1.7/SCN9A (IC(50)=610 nM). Also shows a weak activity towards Nav1.3/SCN3A (IC(50)=7950 nM). In addition, inhibits voltage-gated potassium channels (Kv) in rat DRG neurons. It does not alter the voltage dependence of activation, but it causes a small hyperpolarizing shift in the steady-state inactivations of Nav1.7/SNC9A. Chimera experiments show that the toxin binds to the DIIS3-S4 linker (site 4) of Nav1.7/SCN9A, whereas Nav1.7/SCN9A Asp-827 residue is shown by substitution experiments to be critical for its sensitivity. The toxin traps the domain II voltage sensor in the closed configuration, and not in an outward position. In vivo, shows analgesic activity in three rodent pain models (formalin-induced, acid-induced, and thermal). In Chilobrachys guangxiensis (Chinese earth tiger tarantula), this protein is Mu-theraphotoxin-Cg1a.